Reading from the N-terminus, the 351-residue chain is Flap endonuclease 1 (351 aa).

Positions 1-98 (MDLAELVEEI…QELERRKKVK (98 aa)) are N-domain. Mg(2+) contacts are provided by D27, D80, E154, E156, D175, D177, and D238. An I-domain region spans residues 118 to 260 (ELKKYAQMSI…TAYRIIKKYG (143 aa)). The tract at residues 343–351 (RQTGLDQWF) is interaction with PCNA.

Belongs to the XPG/RAD2 endonuclease family. FEN1 subfamily. Interacts with PCNA. PCNA stimulates the nuclease activity without altering cleavage specificity. Mg(2+) is required as a cofactor.

Functionally, structure-specific nuclease with 5'-flap endonuclease and 5'-3' exonuclease activities involved in DNA replication and repair. During DNA replication, cleaves the 5'-overhanging flap structure that is generated by displacement synthesis when DNA polymerase encounters the 5'-end of a downstream Okazaki fragment. Binds the unpaired 3'-DNA end and kinks the DNA to facilitate 5' cleavage specificity. Cleaves one nucleotide into the double-stranded DNA from the junction in flap DNA, leaving a nick for ligation. Also involved in the base excision repair (BER) pathway. Acts as a genome stabilization factor that prevents flaps from equilibrating into structures that lead to duplications and deletions. Also possesses 5'-3' exonuclease activity on nicked or gapped double-stranded DNA. The polypeptide is Flap endonuclease 1 (Sulfurisphaera tokodaii (strain DSM 16993 / JCM 10545 / NBRC 100140 / 7) (Sulfolobus tokodaii)).